The primary structure comprises 101 residues: Ascorbate-specific PTS system EIIB component (101 aa).

One can recognise a PTS EIIB type-2 domain in the interval 3–96 (VRILAVCGNG…KLLEVIKAHF (94 aa)). C9 acts as the Phosphocysteine intermediate in catalysis. Residue C9 is modified to Phosphocysteine.

The protein localises to the cytoplasm. The enzyme catalyses N(pros)-phospho-L-histidyl-[protein] + L-ascorbate(out) = L-ascorbate 6-phosphate(in) + L-histidyl-[protein]. In terms of biological role, the phosphoenolpyruvate-dependent sugar phosphotransferase system (sugar PTS), a major carbohydrate active transport system, catalyzes the phosphorylation of incoming sugar substrates concomitantly with their translocation across the cell membrane. The enzyme II UlaABC PTS system is involved in ascorbate transport. In Shigella sonnei (strain Ss046), this protein is Ascorbate-specific PTS system EIIB component (ulaB).